The following is a 321-amino-acid chain: Lipoyl synthase (321 aa).

Residues Cys68, Cys73, Cys79, Cys94, Cys98, Cys101, and Ser308 each coordinate [4Fe-4S] cluster. The region spanning 80 to 297 (FNHGTATFMI…KALADELGFT (218 aa)) is the Radical SAM core domain.

The protein belongs to the radical SAM superfamily. Lipoyl synthase family. The cofactor is [4Fe-4S] cluster.

It localises to the cytoplasm. The catalysed reaction is [[Fe-S] cluster scaffold protein carrying a second [4Fe-4S](2+) cluster] + N(6)-octanoyl-L-lysyl-[protein] + 2 oxidized [2Fe-2S]-[ferredoxin] + 2 S-adenosyl-L-methionine + 4 H(+) = [[Fe-S] cluster scaffold protein] + N(6)-[(R)-dihydrolipoyl]-L-lysyl-[protein] + 4 Fe(3+) + 2 hydrogen sulfide + 2 5'-deoxyadenosine + 2 L-methionine + 2 reduced [2Fe-2S]-[ferredoxin]. It participates in protein modification; protein lipoylation via endogenous pathway; protein N(6)-(lipoyl)lysine from octanoyl-[acyl-carrier-protein]: step 2/2. Its function is as follows. Catalyzes the radical-mediated insertion of two sulfur atoms into the C-6 and C-8 positions of the octanoyl moiety bound to the lipoyl domains of lipoate-dependent enzymes, thereby converting the octanoylated domains into lipoylated derivatives. The protein is Lipoyl synthase of Shewanella putrefaciens (strain CN-32 / ATCC BAA-453).